The chain runs to 344 residues: Nicotinate-nucleotide--dimethylbenzimidazole phosphoribosyltransferase (344 aa).

The active-site Proton acceptor is glutamate 305.

Belongs to the CobT family.

It carries out the reaction 5,6-dimethylbenzimidazole + nicotinate beta-D-ribonucleotide = alpha-ribazole 5'-phosphate + nicotinate + H(+). It participates in nucleoside biosynthesis; alpha-ribazole biosynthesis; alpha-ribazole from 5,6-dimethylbenzimidazole: step 1/2. In terms of biological role, catalyzes the synthesis of alpha-ribazole-5'-phosphate from nicotinate mononucleotide (NAMN) and 5,6-dimethylbenzimidazole (DMB). The polypeptide is Nicotinate-nucleotide--dimethylbenzimidazole phosphoribosyltransferase (Agrobacterium fabrum (strain C58 / ATCC 33970) (Agrobacterium tumefaciens (strain C58))).